The chain runs to 461 residues: Photosystem II CP43 reaction center protein (461 aa).

Positions 1-2 are excised as a propeptide; the sequence is ME. Thr-3 carries the post-translational modification N-acetylthreonine. The residue at position 3 (Thr-3) is a Phosphothreonine. 5 consecutive transmembrane segments (helical) span residues 57–81, 122–143, 166–188, 243–263, and 279–300; these read LFEV…PHLA, LLGP…KDRN, KALY…RKIT, KPFA…LSYS, and WFNN…ASQA. Residue Glu-355 participates in [CaMn4O5] cluster binding. The helical transmembrane segment at 435–459 threads the bilayer; the sequence is RARAAAAGFEKGIDRDFEPVLSMTP.

Belongs to the PsbB/PsbC family. PsbC subfamily. In terms of assembly, PSII is composed of 1 copy each of membrane proteins PsbA, PsbB, PsbC, PsbD, PsbE, PsbF, PsbH, PsbI, PsbJ, PsbK, PsbL, PsbM, PsbT, PsbX, PsbY, PsbZ, Psb30/Ycf12, at least 3 peripheral proteins of the oxygen-evolving complex and a large number of cofactors. It forms dimeric complexes. Binds multiple chlorophylls and provides some of the ligands for the Ca-4Mn-5O cluster of the oxygen-evolving complex. It may also provide a ligand for a Cl- that is required for oxygen evolution. PSII binds additional chlorophylls, carotenoids and specific lipids. serves as cofactor.

The protein resides in the plastid. Its subcellular location is the chloroplast thylakoid membrane. One of the components of the core complex of photosystem II (PSII). It binds chlorophyll and helps catalyze the primary light-induced photochemical processes of PSII. PSII is a light-driven water:plastoquinone oxidoreductase, using light energy to abstract electrons from H(2)O, generating O(2) and a proton gradient subsequently used for ATP formation. This chain is Photosystem II CP43 reaction center protein, found in Gossypium barbadense (Sea Island cotton).